The primary structure comprises 293 residues: Bifunctional protein FolD (293 aa).

NADP(+) is bound by residues 166-168 and Ile232; that span reads GAS.

Belongs to the tetrahydrofolate dehydrogenase/cyclohydrolase family. Homodimer.

It catalyses the reaction (6R)-5,10-methylene-5,6,7,8-tetrahydrofolate + NADP(+) = (6R)-5,10-methenyltetrahydrofolate + NADPH. The catalysed reaction is (6R)-5,10-methenyltetrahydrofolate + H2O = (6R)-10-formyltetrahydrofolate + H(+). The protein operates within one-carbon metabolism; tetrahydrofolate interconversion. Its function is as follows. Catalyzes the oxidation of 5,10-methylenetetrahydrofolate to 5,10-methenyltetrahydrofolate and then the hydrolysis of 5,10-methenyltetrahydrofolate to 10-formyltetrahydrofolate. This is Bifunctional protein FolD from Yersinia enterocolitica serotype O:8 / biotype 1B (strain NCTC 13174 / 8081).